Here is a 696-residue protein sequence, read N- to C-terminus: Elongation factor G (696 aa).

Positions 8–282 (KDYRNIGIMA…AVVDYLPSPL (275 aa)) constitute a tr-type G domain. GTP contacts are provided by residues 17–24 (AHIDAGKT), 81–85 (DTPGH), and 135–138 (NKMD).

The protein belongs to the TRAFAC class translation factor GTPase superfamily. Classic translation factor GTPase family. EF-G/EF-2 subfamily.

The protein localises to the cytoplasm. In terms of biological role, catalyzes the GTP-dependent ribosomal translocation step during translation elongation. During this step, the ribosome changes from the pre-translocational (PRE) to the post-translocational (POST) state as the newly formed A-site-bound peptidyl-tRNA and P-site-bound deacylated tRNA move to the P and E sites, respectively. Catalyzes the coordinated movement of the two tRNA molecules, the mRNA and conformational changes in the ribosome. The protein is Elongation factor G of Mycoplasmopsis synoviae (strain 53) (Mycoplasma synoviae).